The following is a 209-amino-acid chain: Imidazole glycerol phosphate synthase subunit HisH (209 aa).

The region spanning 1–205 (MIAIIDYGMG…KGVVETWKSS (205 aa)) is the Glutamine amidotransferase type-1 domain. Residue Cys-79 is the Nucleophile of the active site. Active-site residues include His-180 and Glu-182.

As to quaternary structure, heterodimer of HisH and HisF.

It localises to the cytoplasm. It catalyses the reaction 5-[(5-phospho-1-deoxy-D-ribulos-1-ylimino)methylamino]-1-(5-phospho-beta-D-ribosyl)imidazole-4-carboxamide + L-glutamine = D-erythro-1-(imidazol-4-yl)glycerol 3-phosphate + 5-amino-1-(5-phospho-beta-D-ribosyl)imidazole-4-carboxamide + L-glutamate + H(+). The enzyme catalyses L-glutamine + H2O = L-glutamate + NH4(+). It participates in amino-acid biosynthesis; L-histidine biosynthesis; L-histidine from 5-phospho-alpha-D-ribose 1-diphosphate: step 5/9. Its function is as follows. IGPS catalyzes the conversion of PRFAR and glutamine to IGP, AICAR and glutamate. The HisH subunit catalyzes the hydrolysis of glutamine to glutamate and ammonia as part of the synthesis of IGP and AICAR. The resulting ammonia molecule is channeled to the active site of HisF. The sequence is that of Imidazole glycerol phosphate synthase subunit HisH from Bacillus anthracis (strain CDC 684 / NRRL 3495).